A 212-amino-acid chain; its full sequence is MTDLSDIRREYTKGGLRRADLPQNPMQLFELWMTQARDAELSDPTAMCVATVDEHGQPYQRIVLLKRFDDSGFVFFTNLGSRKAQQIAANNKVSLHFPWHPIERQVSILGEAQPLSTAEVLKYFMTRPKDSQIAAWVSQQSSKLSARQVLEGKFFEMKAKFAKGDVPLPSFWGGYLVKPSSIEFWQGGEHRLHDRFLYTRQADEWVIDRLAP.

Substrate contacts are provided by residues 8–11 and Lys-66; that span reads RREY. FMN contacts are provided by residues 61–66, 76–77, Arg-82, Lys-83, and Gln-105; these read RIVLLK and FT. Substrate contacts are provided by Tyr-123, Arg-127, and Ser-131. FMN is bound by residues 140–141 and Trp-185; that span reads QS. 191–193 lines the substrate pocket; that stretch reads RLH. Arg-195 contributes to the FMN binding site.

Belongs to the pyridoxamine 5'-phosphate oxidase family. Homodimer. It depends on FMN as a cofactor.

The catalysed reaction is pyridoxamine 5'-phosphate + O2 + H2O = pyridoxal 5'-phosphate + H2O2 + NH4(+). It catalyses the reaction pyridoxine 5'-phosphate + O2 = pyridoxal 5'-phosphate + H2O2. The protein operates within cofactor metabolism; pyridoxal 5'-phosphate salvage; pyridoxal 5'-phosphate from pyridoxamine 5'-phosphate: step 1/1. Its pathway is cofactor metabolism; pyridoxal 5'-phosphate salvage; pyridoxal 5'-phosphate from pyridoxine 5'-phosphate: step 1/1. Catalyzes the oxidation of either pyridoxine 5'-phosphate (PNP) or pyridoxamine 5'-phosphate (PMP) into pyridoxal 5'-phosphate (PLP). This is Pyridoxine/pyridoxamine 5'-phosphate oxidase from Shewanella sp. (strain MR-4).